A 406-amino-acid polypeptide reads, in one-letter code: Serine hydroxymethyltransferase (406 aa).

(6S)-5,6,7,8-tetrahydrofolate is bound by residues L111 and 115–117 (GHL). K220 is subject to N6-(pyridoxal phosphate)lysine.

The protein belongs to the SHMT family. Homodimer. It depends on pyridoxal 5'-phosphate as a cofactor.

It localises to the cytoplasm. It carries out the reaction (6R)-5,10-methylene-5,6,7,8-tetrahydrofolate + glycine + H2O = (6S)-5,6,7,8-tetrahydrofolate + L-serine. The protein operates within one-carbon metabolism; tetrahydrofolate interconversion. Its pathway is amino-acid biosynthesis; glycine biosynthesis; glycine from L-serine: step 1/1. Functionally, catalyzes the reversible interconversion of serine and glycine with tetrahydrofolate (THF) serving as the one-carbon carrier. This reaction serves as the major source of one-carbon groups required for the biosynthesis of purines, thymidylate, methionine, and other important biomolecules. Also exhibits THF-independent aldolase activity toward beta-hydroxyamino acids, producing glycine and aldehydes, via a retro-aldol mechanism. This chain is Serine hydroxymethyltransferase, found in Mycoplasma pneumoniae (strain ATCC 29342 / M129 / Subtype 1) (Mycoplasmoides pneumoniae).